The following is a 197-amino-acid chain: Class A basic helix-loop-helix protein 15 (197 aa).

Residues 1-12 are compositionally biased toward basic residues; sequence MKTKNRPPRRRT. 2 disordered regions span residues 1–82 and 175–197; these read MKTK…ERER and TEDQ…REGS. Phosphothreonine occurs at positions 12 and 25. Polar residues predominate over residues 27-36; that stretch reads DRSQSGSGAS. Residues 65–82 are compositionally biased toward basic and acidic residues; the sequence is SRRENSVQRRLESNERER. The region spanning 72-124 is the bHLH domain; sequence QRRLESNERERQRMHKLNNAFQALREVIPHVRADKKLSKIETLTLAKNYIKSL.

As to quaternary structure, forms homodimers or heterodimers with TCF3 gene products E12 and E47. These dimers bind to the E-box site, however, heterodimer with MYOD1 does not bind target DNA. As to expression, expressed in liver, spleen and olfactory epithelium. Weaker expression is seen in skeletal muscle, cardiac muscle, eye and brain tissue.

The protein resides in the nucleus. In terms of biological role, plays a role in controlling the transcriptional activity of MyoD, ensuring that expanding myoblast populations remain undifferentiated. Repression may occur through muscle-specific E-box occupancy by homodimers. May also negatively regulate bHLH-mediated transcription through an N-terminal repressor domain. Serves as a key regulator of acinar cell function, stability, and identity. Also required for normal organelle localization in exocrine cells and for mitochondrial calcium ion transport. May function as a unique regulator of gene expression in several different embryonic and postnatal cell lineages. Binds to the E-box consensus sequence 5'-CANNTG-3'. This Rattus norvegicus (Rat) protein is Class A basic helix-loop-helix protein 15 (Bhlha15).